A 345-amino-acid chain; its full sequence is Biotin synthase (345 aa).

Residues 39 to 266 (NEVQVSTLLS…ASHVRLSAGR (228 aa)) enclose the Radical SAM core domain. Positions 54, 58, and 61 each coordinate [4Fe-4S] cluster. [2Fe-2S] cluster contacts are provided by Cys98, Cys129, Cys189, and Arg261.

It belongs to the radical SAM superfamily. Biotin synthase family. As to quaternary structure, homodimer. The cofactor is [4Fe-4S] cluster. [2Fe-2S] cluster is required as a cofactor.

The enzyme catalyses (4R,5S)-dethiobiotin + (sulfur carrier)-SH + 2 reduced [2Fe-2S]-[ferredoxin] + 2 S-adenosyl-L-methionine = (sulfur carrier)-H + biotin + 2 5'-deoxyadenosine + 2 L-methionine + 2 oxidized [2Fe-2S]-[ferredoxin]. It functions in the pathway cofactor biosynthesis; biotin biosynthesis; biotin from 7,8-diaminononanoate: step 2/2. Catalyzes the conversion of dethiobiotin (DTB) to biotin by the insertion of a sulfur atom into dethiobiotin via a radical-based mechanism. The protein is Biotin synthase of Idiomarina loihiensis (strain ATCC BAA-735 / DSM 15497 / L2-TR).